A 378-amino-acid chain; its full sequence is Protein RecA (378 aa).

Position 79 to 86 (79 to 86) interacts with ATP; it reads GPESSGKT.

Belongs to the RecA family.

Its subcellular location is the cytoplasm. Can catalyze the hydrolysis of ATP in the presence of single-stranded DNA, the ATP-dependent uptake of single-stranded DNA by duplex DNA, and the ATP-dependent hybridization of homologous single-stranded DNAs. It interacts with LexA causing its activation and leading to its autocatalytic cleavage. The chain is Protein RecA from Streptococcus pyogenes serotype M12 (strain MGAS2096).